Reading from the N-terminus, the 172-residue chain is uncharacterized protein (172 aa).

This is an uncharacterized protein from Pasteurella multocida (strain Pm70).